Here is a 100-residue protein sequence, read N- to C-terminus: Urease subunit gamma (100 aa).

It belongs to the urease gamma subunit family. In terms of assembly, heterotrimer of UreA (gamma), UreB (beta) and UreC (alpha) subunits. Three heterotrimers associate to form the active enzyme.

It localises to the cytoplasm. The catalysed reaction is urea + 2 H2O + H(+) = hydrogencarbonate + 2 NH4(+). Its pathway is nitrogen metabolism; urea degradation; CO(2) and NH(3) from urea (urease route): step 1/1. The chain is Urease subunit gamma from Bacillus sp. (strain TB-90).